A 348-amino-acid polypeptide reads, in one-letter code: Secreted frizzled-related protein 4 (348 aa).

A signal peptide spans 1 to 18; sequence MLLSILVALCLCVRLALG. The region spanning 19-139 is the FZ domain; that stretch reads VRGAPCEAVR…VYDRGVCISP (121 aa). 5 cysteine pairs are disulfide-bonded: C24–C85, C32–C78, C69–C108, C97–C136, and C101–C125. 2 N-linked (GlcNAc...) asparagine glycosylation sites follow: N38 and N68. Residues N116, N194, and N240 are each glycosylated (N-linked (GlcNAc...) asparagine). Residues 178-296 form the NTR domain; sequence CKCKKVKPTL…WEERLQEQQR (119 aa). Residues 289-303 show a composition bias toward basic and acidic residues; sequence ERLQEQQRTTQDKKQ. The disordered stretch occupies residues 289 to 348; it reads ERLQEQQRTTQDKKQIASRTSRSNPPKPKGRSPASKPASPKKNIKARSAPKKSNPKKSTS. A compositionally biased stretch (basic residues) spans 330-348; it reads KNIKARSAPKKSNPKKSTS.

The protein belongs to the secreted frizzled-related protein (sFRP) family. Expressed in the involuting mammary gland, ovarian corpus luteum and prostate. In ovaries, low levels found in granulosa cells. High levels in corpora lutea of pregnant animals.

It localises to the secreted. In terms of biological role, soluble frizzled-related proteins (sFRPS) function as modulators of Wnt signaling through direct interaction with Wnts. They have a role in regulating cell growth and differentiation in specific cell types. SFRP4 plays a role in bone morphogenesis. May also act as a regulator of adult uterine morphology and function. May also increase apoptosis during ovulation possibly through modulation of FZ1/FZ4/WNT4 signaling. Has phosphaturic effects by specifically inhibiting sodium-dependent phosphate uptake. The polypeptide is Secreted frizzled-related protein 4 (Sfrp4) (Rattus norvegicus (Rat)).